A 469-amino-acid polypeptide reads, in one-letter code: Glutamate--tRNA ligase (469 aa).

A 'HIGH' region motif is present at residues Pro-9–Gly-19. Zn(2+)-binding residues include Cys-98, Cys-100, Cys-125, and Asp-127. The 'KMSKS' region motif lies at Lys-236 to Arg-240. Lys-239 is a binding site for ATP.

This sequence belongs to the class-I aminoacyl-tRNA synthetase family. Glutamate--tRNA ligase type 1 subfamily. As to quaternary structure, monomer. Zn(2+) is required as a cofactor.

Its subcellular location is the cytoplasm. It carries out the reaction tRNA(Glu) + L-glutamate + ATP = L-glutamyl-tRNA(Glu) + AMP + diphosphate. Its function is as follows. Catalyzes the attachment of glutamate to tRNA(Glu) in a two-step reaction: glutamate is first activated by ATP to form Glu-AMP and then transferred to the acceptor end of tRNA(Glu). The chain is Glutamate--tRNA ligase from Shewanella sediminis (strain HAW-EB3).